The primary structure comprises 304 residues: Protein Largen (304 aa).

A compositionally biased stretch (polar residues) spans M1–C13. Disordered stretches follow at residues M1–K27, Q66–S91, L114–P160, and H239–V304. Residues I33–E70 adopt a coiled-coil conformation. A compositionally biased stretch (low complexity) spans T77–S91. Pro residues-rich tracts occupy residues P120 to L129, H239 to P261, and P277 to P289.

Its function is as follows. Regulator of cell size that promotes cell size increase independently of mTOR and Hippo signaling pathways. Acts by stimulating the translation of specific mRNAs, including those encoding proteins affecting mitochondrial functions. Increases mitochondrial mass and respiration. The sequence is that of Protein Largen (PRR16) from Homo sapiens (Human).